Reading from the N-terminus, the 340-residue chain is Adenosine deaminase-like protein (340 aa).

Residues H14 and H16 each coordinate Zn(2+). N(6)-methyl-AMP-binding positions include H16, N18, H68, 100–103, and G173; that span reads TTPK. H200 is a Zn(2+) binding site. The N(6)-methyl-AMP site is built by E203, D278, and D279. The active-site Proton donor is the E203. A Zn(2+)-binding site is contributed by D278.

This sequence belongs to the metallo-dependent hydrolases superfamily. Adenosine and AMP deaminases family. In terms of assembly, monomer. It depends on Zn(2+) as a cofactor.

The catalysed reaction is N(6)-methyl-AMP + H2O + H(+) = IMP + methylamine. Its function is as follows. Catalyzes the hydrolysis of the free cytosolic methylated adenosine nucleotide N(6)-methyl-AMP (N6-mAMP) to produce inositol monophosphate (IMP) and methylamine. Is required for the catabolism of cytosolic N6-mAMP, which is derived from the degradation of mRNA containing N6-methylated adenine (m6A). The polypeptide is Adenosine deaminase-like protein (Drosophila pseudoobscura pseudoobscura (Fruit fly)).